Here is a 286-residue protein sequence, read N- to C-terminus: Alpha-ketoglutarate-dependent dioxygenase alkB homolog 3 (286 aa).

The interval Met1–Pro38 is disordered. Positions Ser20–Gln36 are enriched in polar residues. Substrate contacts are provided by residues Trp115 and Tyr141–Tyr143. In terms of domain architecture, Fe2OG dioxygenase spans Ser172–Tyr278. Leu177 bears the (4R)-5-hydroxyleucine; alternate mark. Leu177 is subject to (4R)-5-oxoleucine; alternate. A 2-oxoglutarate-binding site is contributed by Asn179 to Tyr181. Fe cation is bound by residues His191 and Asp193. Residue Asp194 participates in substrate binding. His257 is a Fe cation binding site. 2-oxoglutarate contacts are provided by residues Arg269–Arg275 and Arg275.

It belongs to the alkB family. As to quaternary structure, interacts with the ASCC complex composed of ASCC1, ASCC2 and ASCC3. Interacts directly with ASCC3, and is thereby recruited to the ASCC complex. Interacts with OTUD4; the interaction is direct. Interacts with USP7 and USP9X. Requires Fe(2+) as cofactor. Post-translationally, ubiquitinated; undergoes 'Lys-48'-linked polyubiquitination. OTUD4 promotes USP7 and USP9X-dependent deubiquitination of 'Lys-48'-polyubiquitinated ALKBH3 promoting the repair of alkylated DNA lesions.

It is found in the nucleus. It localises to the cytoplasm. The enzyme catalyses an N(1)-methyladenosine in mRNA + 2-oxoglutarate + O2 = an adenosine in mRNA + formaldehyde + succinate + CO2. The catalysed reaction is a methylated nucleobase within DNA + 2-oxoglutarate + O2 = a nucleobase within DNA + formaldehyde + succinate + CO2. It carries out the reaction an N(1)-methyl-2'-deoxyadenosine in single-stranded DNA + 2-oxoglutarate + O2 = a 2'-deoxyadenosine in single-stranded DNA + formaldehyde + succinate + CO2 + H(+). It catalyses the reaction an N(3)-methyl-2'-deoxycytidine in single-stranded DNA + 2-oxoglutarate + O2 = a 2'-deoxycytidine in single-stranded DNA + formaldehyde + succinate + CO2 + H(+). The enzyme catalyses a 3,N(4)-etheno-2'-deoxycytidine in single-stranded DNA + 2-oxoglutarate + O2 + H2O = a 2'-deoxycytidine in single-stranded DNA + glyoxal + succinate + CO2. Activated by ascorbate. Dioxygenase that mediates demethylation of DNA and RNA containing 1-methyladenosine (m1A). Repairs alkylated DNA containing 1-methyladenosine (m1A) and 3-methylcytosine (m3C) by oxidative demethylation. Has a strong preference for single-stranded DNA. Able to process alkylated m3C within double-stranded regions via its interaction with ASCC3, which promotes DNA unwinding to generate single-stranded substrate needed for ALKBH3. Can repair exocyclic 3,N4-ethenocytosine adducs in single-stranded DNA. Also acts on RNA. Demethylates N(1)-methyladenosine (m1A) RNA, an epigenetic internal modification of messenger RNAs (mRNAs) highly enriched within 5'-untranslated regions (UTRs) and in the vicinity of start codons. Requires molecular oxygen, alpha-ketoglutarate and iron. The sequence is that of Alpha-ketoglutarate-dependent dioxygenase alkB homolog 3 from Bos taurus (Bovine).